Reading from the N-terminus, the 469-residue chain is Neuraminidase (469 aa).

The Intravirion portion of the chain corresponds to 1–9 (MNPNQKIIT). A helical transmembrane segment spans residues 10-30 (IGSVSLTIATICFLMQIAILV). An involved in apical transport and lipid raft association region spans residues 11–33 (GSVSLTIATICFLMQIAILVTTV). Over 31–469 (TTVTLHFKQY…DGADINLMPI (439 aa)) the chain is Virion surface. A hypervariable stalk region region spans residues 36 to 88 (HFKQYECDSPANNQVMPCEPIIIERNITEIVYLTNTTIEKEICPKLVEYRNWS). 3 N-linked (GlcNAc...) asparagine; by host glycosylation sites follow: asparagine 61, asparagine 70, and asparagine 86. The tract at residues 91–469 (QCKITGFAPF…DGADINLMPI (379 aa)) is head of neuraminidase. Cystine bridges form between cysteine 92/cysteine 417, cysteine 124/cysteine 129, cysteine 183/cysteine 230, cysteine 232/cysteine 237, cysteine 278/cysteine 291, cysteine 280/cysteine 289, cysteine 318/cysteine 337, and cysteine 421/cysteine 447. Arginine 118 is a binding site for substrate. N-linked (GlcNAc...) asparagine; by host glycosylation is present at asparagine 146. The active-site Proton donor/acceptor is aspartate 151. Arginine 152 serves as a coordination point for substrate. Asparagine 200 and asparagine 234 each carry an N-linked (GlcNAc...) asparagine; by host glycan. 276 to 277 (EE) is a substrate binding site. Arginine 292 is a binding site for substrate. Residues aspartate 293, glycine 297, and aspartate 324 each coordinate Ca(2+). Arginine 371 contacts substrate. Asparagine 402 carries an N-linked (GlcNAc...) asparagine; by host glycan. The Nucleophile role is filled by tyrosine 406.

The protein belongs to the glycosyl hydrolase 34 family. In terms of assembly, homotetramer. It depends on Ca(2+) as a cofactor. In terms of processing, N-glycosylated.

The protein localises to the virion membrane. It localises to the host apical cell membrane. It carries out the reaction Hydrolysis of alpha-(2-&gt;3)-, alpha-(2-&gt;6)-, alpha-(2-&gt;8)- glycosidic linkages of terminal sialic acid residues in oligosaccharides, glycoproteins, glycolipids, colominic acid and synthetic substrates.. Its activity is regulated as follows. Inhibited by the neuraminidase inhibitors zanamivir (Relenza) and oseltamivir (Tamiflu). These drugs interfere with the release of progeny virus from infected cells and are effective against all influenza strains. Resistance to neuraminidase inhibitors is quite rare. Functionally, catalyzes the removal of terminal sialic acid residues from viral and cellular glycoconjugates. Cleaves off the terminal sialic acids on the glycosylated HA during virus budding to facilitate virus release. Additionally helps virus spread through the circulation by further removing sialic acids from the cell surface. These cleavages prevent self-aggregation and ensure the efficient spread of the progeny virus from cell to cell. Otherwise, infection would be limited to one round of replication. Described as a receptor-destroying enzyme because it cleaves a terminal sialic acid from the cellular receptors. May facilitate viral invasion of the upper airways by cleaving the sialic acid moieties on the mucin of the airway epithelial cells. Likely to plays a role in the budding process through its association with lipid rafts during intracellular transport. May additionally display a raft-association independent effect on budding. Plays a role in the determination of host range restriction on replication and virulence. Sialidase activity in late endosome/lysosome traffic seems to enhance virus replication. The protein is Neuraminidase of Aves (whales).